We begin with the raw amino-acid sequence, 453 residues long: GTPase Der (453 aa).

EngA-type G domains lie at 4-169 and 177-352; these read PIVA…SETP and IKVA…RQFE. Residues 10-17, 57-61, 120-123, 183-190, 230-234, and 295-298 contribute to the GTP site; these read GRPNVGKS, DTGGL, NKCE, DTAGI, and NKWD. The KH-like domain maps to 353–438; the sequence is QRVTTSVINE…PIRLLWRGKK (86 aa).

This sequence belongs to the TRAFAC class TrmE-Era-EngA-EngB-Septin-like GTPase superfamily. EngA (Der) GTPase family. As to quaternary structure, associates with the 50S ribosomal subunit.

In terms of biological role, GTPase that plays an essential role in the late steps of ribosome biogenesis. The polypeptide is GTPase Der (Acaryochloris marina (strain MBIC 11017)).